Here is a 110-residue protein sequence, read N- to C-terminus: DNA-directed RNA polymerase subunit omega (110 aa).

This sequence belongs to the RNA polymerase subunit omega family. As to quaternary structure, the RNAP catalytic core consists of 2 alpha, 1 beta, 1 beta' and 1 omega subunit. When a sigma factor is associated with the core the holoenzyme is formed, which can initiate transcription.

The catalysed reaction is RNA(n) + a ribonucleoside 5'-triphosphate = RNA(n+1) + diphosphate. Functionally, promotes RNA polymerase assembly. Latches the N- and C-terminal regions of the beta' subunit thereby facilitating its interaction with the beta and alpha subunits. The sequence is that of DNA-directed RNA polymerase subunit omega from Vesicomyosocius okutanii subsp. Calyptogena okutanii (strain HA).